Reading from the N-terminus, the 418-residue chain is Tyrosine--tRNA ligase (418 aa).

An L-tyrosine-binding site is contributed by Tyr34. Residues 39–48 carry the 'HIGH' region motif; that stretch reads PTADSLHLGH. The L-tyrosine site is built by Tyr169 and Gln173. Residues 229–233 carry the 'KMSKS' region motif; that stretch reads KFGKS. Lys232 contributes to the ATP binding site. The 67-residue stretch at 352–418 folds into the S4 RNA-binding domain; the sequence is LNIVELLVNA…GKKKNFVLTY (67 aa).

The protein belongs to the class-I aminoacyl-tRNA synthetase family. TyrS type 1 subfamily. In terms of assembly, homodimer.

Its subcellular location is the cytoplasm. It carries out the reaction tRNA(Tyr) + L-tyrosine + ATP = L-tyrosyl-tRNA(Tyr) + AMP + diphosphate + H(+). Its function is as follows. Catalyzes the attachment of tyrosine to tRNA(Tyr) in a two-step reaction: tyrosine is first activated by ATP to form Tyr-AMP and then transferred to the acceptor end of tRNA(Tyr). This chain is Tyrosine--tRNA ligase, found in Streptococcus thermophilus (strain ATCC BAA-491 / LMD-9).